Reading from the N-terminus, the 214-residue chain is Pyridoxine/pyridoxamine 5'-phosphate oxidase (214 aa).

Residues 8-11 (RINY) and K66 each bind substrate. Residues 61–66 (RILLIK), 76–77 (FT), R82, K83, and Q105 contribute to the FMN site. Positions 123, 127, and 131 each coordinate substrate. Residues 140–141 (QS) and W184 each bind FMN. 190 to 192 (RLH) lines the substrate pocket. R194 provides a ligand contact to FMN.

Belongs to the pyridoxamine 5'-phosphate oxidase family. As to quaternary structure, homodimer. FMN is required as a cofactor.

The enzyme catalyses pyridoxamine 5'-phosphate + O2 + H2O = pyridoxal 5'-phosphate + H2O2 + NH4(+). It carries out the reaction pyridoxine 5'-phosphate + O2 = pyridoxal 5'-phosphate + H2O2. Its pathway is cofactor metabolism; pyridoxal 5'-phosphate salvage; pyridoxal 5'-phosphate from pyridoxamine 5'-phosphate: step 1/1. It functions in the pathway cofactor metabolism; pyridoxal 5'-phosphate salvage; pyridoxal 5'-phosphate from pyridoxine 5'-phosphate: step 1/1. Functionally, catalyzes the oxidation of either pyridoxine 5'-phosphate (PNP) or pyridoxamine 5'-phosphate (PMP) into pyridoxal 5'-phosphate (PLP). The protein is Pyridoxine/pyridoxamine 5'-phosphate oxidase of Burkholderia vietnamiensis (strain G4 / LMG 22486) (Burkholderia cepacia (strain R1808)).